The following is a 191-amino-acid chain: Divergent paired-related homeobox (191 aa).

Residues 1–15 (MPGSEDLRKGKDQMH) show a composition bias toward basic and acidic residues. The interval 1–20 (MPGSEDLRKGKDQMHSHRKR) is disordered. Residues 16–75 (SHRKRTMFTKKQLEDLNILFNENPYPNPSLQKEMASKIDIHPTVLQVWFKNHRAKLKKAK) constitute a DNA-binding region (homeobox).

It belongs to the paired homeobox family.

It is found in the nucleus. Its function is as follows. Transcription factor that acts as a repressor. In Homo sapiens (Human), this protein is Divergent paired-related homeobox.